A 93-amino-acid chain; its full sequence is Cell division protein CrgA (93 aa).

The next 2 membrane-spanning stretches (helical) occupy residues 31–51 and 70–90; these read VWFVSLFIGLMLIGLIWLMVF and LGPWNYAIAFAFMITGLLLTM.

The protein belongs to the CrgA family.

It localises to the cell membrane. Involved in cell division. In Mycobacterium bovis (strain ATCC BAA-935 / AF2122/97), this protein is Cell division protein CrgA.